Reading from the N-terminus, the 552-residue chain is HTH-type transcriptional regulator SgrR (552 aa).

The 116-residue stretch at M1–R116 folds into the HTH marR-type domain. Residues L26–A49 constitute a DNA-binding region (H-T-H motif). A solute-binding region spans residues E163–W493.

In terms of biological role, activates the small RNA gene sgrS under glucose-phosphate stress conditions as well as yfdZ. Represses its own transcription under both stress and non-stress conditions. Might act as a sensor of the intracellular accumulation of phosphoglucose by binding these molecules in its C-terminal solute-binding domain. This is HTH-type transcriptional regulator SgrR from Salmonella typhi.